A 299-amino-acid chain; its full sequence is tRNA-cytidine(32) 2-sulfurtransferase (299 aa).

A PP-loop motif motif is present at residues 56–61; the sequence is SGGKDS. 3 residues coordinate [4Fe-4S] cluster: Cys131, Cys134, and Cys222.

The protein belongs to the TtcA family. As to quaternary structure, homodimer. Requires Mg(2+) as cofactor. [4Fe-4S] cluster is required as a cofactor.

The protein localises to the cytoplasm. The enzyme catalyses cytidine(32) in tRNA + S-sulfanyl-L-cysteinyl-[cysteine desulfurase] + AH2 + ATP = 2-thiocytidine(32) in tRNA + L-cysteinyl-[cysteine desulfurase] + A + AMP + diphosphate + H(+). It participates in tRNA modification. Catalyzes the ATP-dependent 2-thiolation of cytidine in position 32 of tRNA, to form 2-thiocytidine (s(2)C32). The sulfur atoms are provided by the cysteine/cysteine desulfurase (IscS) system. The polypeptide is tRNA-cytidine(32) 2-sulfurtransferase (Xylella fastidiosa (strain M12)).